The primary structure comprises 367 residues: 4-hydroxy-3-methylbut-2-en-1-yl diphosphate synthase (flavodoxin) (367 aa).

The [4Fe-4S] cluster site is built by C268, C271, C303, and E310.

This sequence belongs to the IspG family. Requires [4Fe-4S] cluster as cofactor.

It catalyses the reaction (2E)-4-hydroxy-3-methylbut-2-enyl diphosphate + oxidized [flavodoxin] + H2O + 2 H(+) = 2-C-methyl-D-erythritol 2,4-cyclic diphosphate + reduced [flavodoxin]. It functions in the pathway isoprenoid biosynthesis; isopentenyl diphosphate biosynthesis via DXP pathway; isopentenyl diphosphate from 1-deoxy-D-xylulose 5-phosphate: step 5/6. Converts 2C-methyl-D-erythritol 2,4-cyclodiphosphate (ME-2,4cPP) into 1-hydroxy-2-methyl-2-(E)-butenyl 4-diphosphate. The chain is 4-hydroxy-3-methylbut-2-en-1-yl diphosphate synthase (flavodoxin) from Halalkalibacterium halodurans (strain ATCC BAA-125 / DSM 18197 / FERM 7344 / JCM 9153 / C-125) (Bacillus halodurans).